Reading from the N-terminus, the 501-residue chain is Glutamate--tRNA ligase (501 aa).

The short motif at 21–31 is the 'HIGH' region element; it reads PSPTGTPHVGL. The short motif at 266–270 is the 'KMSKS' region element; the sequence is KLSKR. Residue K269 participates in ATP binding.

Belongs to the class-I aminoacyl-tRNA synthetase family. Glutamate--tRNA ligase type 1 subfamily. As to quaternary structure, monomer.

Its subcellular location is the cytoplasm. The catalysed reaction is tRNA(Glu) + L-glutamate + ATP = L-glutamyl-tRNA(Glu) + AMP + diphosphate. Its function is as follows. Catalyzes the attachment of glutamate to tRNA(Glu) in a two-step reaction: glutamate is first activated by ATP to form Glu-AMP and then transferred to the acceptor end of tRNA(Glu). The sequence is that of Glutamate--tRNA ligase from Kineococcus radiotolerans (strain ATCC BAA-149 / DSM 14245 / SRS30216).